The chain runs to 324 residues: Probable pectinesterase A (324 aa).

An N-terminal signal peptide occupies residues 1-19 (MHGSLLKLALLSFSLASSA). Glutamine 142 provides a ligand contact to substrate. Aspartate 165 functions as the Proton donor in the catalytic mechanism. Aspartate 186 acts as the Nucleophile in catalysis. Substrate is bound by residues arginine 246 and tryptophan 248. N-linked (GlcNAc...) asparagine glycosylation occurs at asparagine 285.

This sequence belongs to the pectinesterase family.

It is found in the secreted. It catalyses the reaction [(1-&gt;4)-alpha-D-galacturonosyl methyl ester](n) + n H2O = [(1-&gt;4)-alpha-D-galacturonosyl](n) + n methanol + n H(+). Its pathway is glycan metabolism; pectin degradation; 2-dehydro-3-deoxy-D-gluconate from pectin: step 1/5. Its function is as follows. Involved in maceration and soft-rotting of plant tissue. The sequence is that of Probable pectinesterase A (pmeA) from Aspergillus flavus (strain ATCC 200026 / FGSC A1120 / IAM 13836 / NRRL 3357 / JCM 12722 / SRRC 167).